Consider the following 388-residue polypeptide: Fetuin-B (388 aa).

Residues 1–18 (MGLLRLLVLCTLAACCMA) form the signal peptide. Cystatin fetuin-B-type domains follow at residues 28-141 (QRPL…YNCT) and 152-264 (TTCP…VTCE). Asparagine 40 carries N-linked (GlcNAc...) asparagine glycosylation. Intrachain disulfides connect cysteine 96–cysteine 107, cysteine 120–cysteine 140, cysteine 154–cysteine 157, cysteine 217–cysteine 224, and cysteine 237–cysteine 263. An N-linked (GlcNAc...) asparagine glycan is attached at asparagine 139. Disordered regions lie at residues 270 to 343 (AQVP…PQGD) and 367 to 388 (KEQRSAECPGPEKENNPLVLPP). The segment covering 279–300 (AVTQGPQKLPQKNTAPTSSPSV) has biased composition (polar residues). O-linked (GalNAc...) threonine glycans are attached at residues threonine 292 and threonine 295. Phosphoserine is present on serine 321. Residues 367–381 (KEQRSAECPGPEKEN) are compositionally biased toward basic and acidic residues.

The protein belongs to the fetuin family. Liver, lung and tongue.

It is found in the secreted. Functionally, protease inhibitor required for egg fertilization. Required to prevent premature zona pellucida hardening before fertilization, probably by inhibiting the protease activity of ASTL, a protease that mediates the cleavage of ZP2 and triggers zona pellucida hardening. The chain is Fetuin-B (Fetub) from Mus musculus (Mouse).